The sequence spans 213 residues: Ribosomal RNA large subunit methyltransferase E (213 aa).

S-adenosyl-L-methionine contacts are provided by Gly60, Trp62, Asp80, Asp96, and Asp121. The Proton acceptor role is filled by Lys161.

It belongs to the class I-like SAM-binding methyltransferase superfamily. RNA methyltransferase RlmE family.

Its subcellular location is the cytoplasm. It catalyses the reaction uridine(2552) in 23S rRNA + S-adenosyl-L-methionine = 2'-O-methyluridine(2552) in 23S rRNA + S-adenosyl-L-homocysteine + H(+). Functionally, specifically methylates the uridine in position 2552 of 23S rRNA at the 2'-O position of the ribose in the fully assembled 50S ribosomal subunit. In Xylella fastidiosa (strain 9a5c), this protein is Ribosomal RNA large subunit methyltransferase E.